The chain runs to 242 residues: Ubiquinone biosynthesis O-methyltransferase (242 aa).

4 residues coordinate S-adenosyl-L-methionine: Arg44, Gly64, Asp85, and Met129.

The protein belongs to the methyltransferase superfamily. UbiG/COQ3 family.

It catalyses the reaction a 3-demethylubiquinol + S-adenosyl-L-methionine = a ubiquinol + S-adenosyl-L-homocysteine + H(+). It carries out the reaction a 3-(all-trans-polyprenyl)benzene-1,2-diol + S-adenosyl-L-methionine = a 2-methoxy-6-(all-trans-polyprenyl)phenol + S-adenosyl-L-homocysteine + H(+). It functions in the pathway cofactor biosynthesis; ubiquinone biosynthesis. Its function is as follows. O-methyltransferase that catalyzes the 2 O-methylation steps in the ubiquinone biosynthetic pathway. The protein is Ubiquinone biosynthesis O-methyltransferase of Yersinia enterocolitica serotype O:8 / biotype 1B (strain NCTC 13174 / 8081).